Here is a 254-residue protein sequence, read N- to C-terminus: Phosphomannomutase (254 aa).

Residue aspartate 16 is the Nucleophile of the active site. Residues aspartate 16 and aspartate 18 each contribute to the Mg(2+) site. Residue aspartate 18 is the Proton donor/acceptor of the active site. The alpha-D-mannose 1-phosphate site is built by arginine 25, arginine 129, arginine 140, arginine 147, serine 185, and aspartate 187. Aspartate 216, tyrosine 228, aspartate 230, and threonine 233 together coordinate Mg(2+).

This sequence belongs to the eukaryotic PMM family. In terms of assembly, homodimer.

The protein localises to the cytoplasm. The enzyme catalyses alpha-D-mannose 1-phosphate = D-mannose 6-phosphate. Its pathway is nucleotide-sugar biosynthesis; GDP-alpha-D-mannose biosynthesis; alpha-D-mannose 1-phosphate from D-fructose 6-phosphate: step 2/2. Involved in the synthesis of the GDP-mannose and dolichol-phosphate-mannose required for a number of critical mannosyl transfer reactions. Required for maintaining N-linked glycoprotein glycosylation at the neuromuscular junction (NMJ) synaptomatrix, and thus acts in multiple pathways that prevent NMJ structural overgrowth, restrict synaptic bouton differentiation, and limit NMJ neurotransmission strength, in order to maintain viability, coordinate movement, and in adults ensure correct wing positioning. Acts in the NMJ trans-synaptic Wg pathway via glycosylation of synaptic Mmp2 which enables dlp/wg signaling during development. This chain is Phosphomannomutase, found in Drosophila melanogaster (Fruit fly).